A 456-amino-acid polypeptide reads, in one-letter code: Exodeoxyribonuclease 7 large subunit (456 aa).

It belongs to the XseA family. Heterooligomer composed of large and small subunits.

The protein localises to the cytoplasm. It catalyses the reaction Exonucleolytic cleavage in either 5'- to 3'- or 3'- to 5'-direction to yield nucleoside 5'-phosphates.. In terms of biological role, bidirectionally degrades single-stranded DNA into large acid-insoluble oligonucleotides, which are then degraded further into small acid-soluble oligonucleotides. The sequence is that of Exodeoxyribonuclease 7 large subunit from Escherichia coli O157:H7.